We begin with the raw amino-acid sequence, 209 residues long: Peptide deformylase 2 (209 aa).

Fe cation-binding residues include Cys-101 and His-149. Residue Glu-150 is part of the active site. Position 153 (His-153) interacts with Fe cation.

It belongs to the polypeptide deformylase family. It depends on Fe(2+) as a cofactor.

The enzyme catalyses N-terminal N-formyl-L-methionyl-[peptide] + H2O = N-terminal L-methionyl-[peptide] + formate. Removes the formyl group from the N-terminal Met of newly synthesized proteins. Requires at least a dipeptide for an efficient rate of reaction. N-terminal L-methionine is a prerequisite for activity but the enzyme has broad specificity at other positions. The chain is Peptide deformylase 2 from Coxiella burnetii (strain RSA 493 / Nine Mile phase I).